The following is a 474-amino-acid chain: tRNA-2-methylthio-N(6)-dimethylallyladenosine synthase (474 aa).

The MTTase N-terminal domain occupies 3 to 120 (KKLHIKTWGC…LPEMINQVKG (118 aa)). [4Fe-4S] cluster is bound by residues cysteine 12, cysteine 49, cysteine 83, cysteine 157, cysteine 161, and cysteine 164. In terms of domain architecture, Radical SAM core spans 143–375 (RAEGPTAFVS…QERINQQAMA (233 aa)). The region spanning 378–441 (RRMLGTTQRI…PNSLRGKVIR (64 aa)) is the TRAM domain.

The protein belongs to the methylthiotransferase family. MiaB subfamily. In terms of assembly, monomer. [4Fe-4S] cluster serves as cofactor.

The protein localises to the cytoplasm. It catalyses the reaction N(6)-dimethylallyladenosine(37) in tRNA + (sulfur carrier)-SH + AH2 + 2 S-adenosyl-L-methionine = 2-methylsulfanyl-N(6)-dimethylallyladenosine(37) in tRNA + (sulfur carrier)-H + 5'-deoxyadenosine + L-methionine + A + S-adenosyl-L-homocysteine + 2 H(+). In terms of biological role, catalyzes the methylthiolation of N6-(dimethylallyl)adenosine (i(6)A), leading to the formation of 2-methylthio-N6-(dimethylallyl)adenosine (ms(2)i(6)A) at position 37 in tRNAs that read codons beginning with uridine. In Cronobacter sakazakii (strain ATCC BAA-894) (Enterobacter sakazakii), this protein is tRNA-2-methylthio-N(6)-dimethylallyladenosine synthase.